The primary structure comprises 90 residues: Inner kinetochore subunit MHF1 (90 aa).

The protein belongs to the TAF9 family. CENP-S/MHF1 subfamily. As to quaternary structure, the MHF histone-fold complex is a heterotetramer of 2 MHF1-MHF2 heterodimers. Together with MPH1/FANCM, forms the FANCM-MHF complex. Component of the inner kinetochore constitutive centromere-associated network (CCAN) (also known as central kinetochore CTF19 complex in yeast), which is composed of at least AME1, CHL4, CNN1, CTF3, CTF19, IML3, MCM16, MCM21, MCM22, MHF1, MHF2, MIF2, NKP1, NKP2, OKP1 and WIP1.

Functionally, dsDNA-binding component of a FANCM-MHF complex involved in DNA damage repair and genome maintenance. FANCM-MHF promotes gene conversion at blocked replication forks, probably by reversal of the stalled fork. Component of the kinetochore, a multiprotein complex that assembles on centromeric DNA and attaches chromosomes to spindle microtubules, mediating chromosome segregation and sister chromatid segregation during meiosis and mitosis. Component of the inner kinetochore constitutive centromere-associated network (CCAN), which serves as a structural platform for outer kinetochore assembly. The polypeptide is Inner kinetochore subunit MHF1 (Saccharomyces cerevisiae (strain ATCC 204508 / S288c) (Baker's yeast)).